A 537-amino-acid polypeptide reads, in one-letter code: MNFRNLIASGSRLGKRFCATVFAPASATGIVEASVSSPAAANVVEASVSSPAAENGVRTSVAAPTVASRQRELYKKLSMLSVTGGTVAETLNQFIMEGITVRKDDLFRCAKTLRKFRRPQHAFEIFDWMEKRKMTFSVSDHAICLDLIGKTKGLEAAENYFNNLDPSAKNHQSTYGALMNCYCVELEEEKAKAHFEIMDELNFVNNSLPFNNMMSMYMRLSQPEKVPVLVDAMKQRGISPCGVTYSIWMQSCGSLNDLDGLEKIIDEMGKDSEAKTTWNTFSNLAAIYTKAGLYEKADSALKSMEEKMNPNNRDSHHFLMSLYAGISKGPEVYRVWESLKKARPEVNNLSYLVMLQAMSKLGDLDGIKKIFTEWESKCWAYDMRLANIAINTYLKGNMYEEAEKILDGAMKKSKGPFSKARQLLMIHLLENDKADLAMKHLEAAVSDSAENKDEWGWSSELVSLFFLHFEKAKDVDGAEDFCKILSNWKPLDSETMTFLIKTYAAAEKTSPDMRERLSQQQIEVSEEIQDLLKTVCP.

The transit peptide at 1–18 (MNFRNLIASGSRLGKRFC) directs the protein to the mitochondrion. PPR repeat units lie at residues 171 to 205 (HQST…NFVN), 206 to 240 (NSLP…GISP), 241 to 275 (CGVT…SEAK), 277 to 307 (TWNT…MEEK), 312 to 346 (NRDS…RPEV), 347 to 377 (NNLS…WESK), and 382 to 416 (DMRL…SKGP).

Belongs to the PPR family. P subfamily.

The protein resides in the mitochondrion. The sequence is that of Pentatricopeptide repeat-containing protein At1g02370, mitochondrial from Arabidopsis thaliana (Mouse-ear cress).